Consider the following 1177-residue polypeptide: Dynein axonemal assembly factor 9 (1177 aa).

The tract at residues 1-27 (MDVYPPRRQGLPRARSPGGSSRGSPSV) is disordered. A compositionally biased stretch (low complexity) spans 11 to 27 (LPRARSPGGSSRGSPSV).

Interacts with ARL3.

May act as an effector for ARL3. The protein is Dynein axonemal assembly factor 9 of Homo sapiens (Human).